Consider the following 425-residue polypeptide: Meiotic recombination protein spo-11 (425 aa).

The segment at 1–38 is disordered; the sequence is MYEYSFNPNIDHEPGSVESQQSTIYSDSDDSDDSFLDD. Residues 15–158 form the Topo IIA-type catalytic domain; sequence GSVESQQSTI…LNILSCGRGI (144 aa). Residues 27–38 are compositionally biased toward acidic residues; sequence DSDDSDDSFLDD. The O-(5'-phospho-DNA)-tyrosine intermediate role is filled by Tyr119. Residues Glu202 and Asp255 each coordinate Mg(2+).

Belongs to the TOP6A family. Requires Mg(2+) as cofactor.

It localises to the nucleus. It catalyses the reaction ATP-dependent breakage, passage and rejoining of double-stranded DNA.. Its function is as follows. Required for meiotic recombination. Mediates DNA cleavage that forms the double-strand breaks (DSB) that initiate meiotic recombination. The sequence is that of Meiotic recombination protein spo-11 (spo-11) from Caenorhabditis elegans.